Reading from the N-terminus, the 1770-residue chain is Transposon Ty2-C Gag-Pol polyprotein (1770 aa).

Composition is skewed to polar residues over residues 1–11 (MESQQLHQNPR), 19–39 (ASVTSKEVPSNQDPLAVSASN), and 49–60 (KVNSQQETTPGT). Disordered regions lie at residues 1–88 (MESQ…YQQH) and 355–453 (SQYK…LPDH). An RNA-binding region spans residues 295 to 397 (ENNINVSDRL…SSKPRAAKAH (103 aa)). The segment covering 369-382 (TSPNTTNTKVTTRN) has biased composition (low complexity). 2 stretches are compositionally biased toward polar residues: residues 399 to 408 (IATSSKFSRV) and 415 to 435 (ESTVSSQYLSDDNELSLGQQQ). Asp-457 functions as the For protease activity; shared with dimeric partner in the catalytic mechanism. Residues 579–636 (NVNKSKSVNKYPYPLIHRMLGHANFRSIQKSLKKNAVTYLKESDIEWSNASTYQCPDC) form an integrase-type zinc finger-like region. The region spanning 656–831 (ESYEPFQYLH…AGLDITTILP (176 aa)) is the Integrase catalytic domain. Asp-667 and Asp-732 together coordinate Mg(2+). Disordered regions lie at residues 1003 to 1038 (EMGGTVESDTTSPRHSSTFTARNQKRPGSPNDMIDL) and 1057 to 1205 (GGTE…TEIE). Composition is skewed to polar residues over residues 1009–1024 (ESDTTSPRHSSTFTAR) and 1065–1082 (QRNSDTNIKYRTTNSTPS). Positions 1193–1227 (KKRSLEDNETEIEVSRDTWNNKNMRSLEPPRSKKR) match the Bipartite nuclear localization signal motif. One can recognise a Reverse transcriptase Ty1/copia-type domain in the interval 1353–1491 (NDYYITQLDI…DILGLEIKYQ (139 aa)). Asp-1361, Asp-1442, Asp-1443, Asp-1625, Glu-1667, and Asp-1700 together coordinate Mg(2+). Residues 1625-1767 (DASYGNQPYY…IKTFKLLTNK (143 aa)) enclose the RNase H Ty1/copia-type domain.

In terms of assembly, the capsid protein forms a homotrimer, from which the VLPs are assembled. The protease is a homodimer, whose active site consists of two apposed aspartic acid residues. Initially, virus-like particles (VLPs) are composed of the structural unprocessed proteins Gag and Gag-Pol, and also contain the host initiator methionine tRNA (tRNA(i)-Met) which serves as a primer for minus-strand DNA synthesis, and a dimer of genomic Ty RNA. Processing of the polyproteins occurs within the particle and proceeds by an ordered pathway, called maturation. First, the protease (PR) is released by autocatalytic cleavage of the Gag-Pol polyprotein, and this cleavage is a prerequisite for subsequent processing at the remaining sites to release the mature structural and catalytic proteins. Maturation takes place prior to the RT reaction and is required to produce transposition-competent VLPs.

It localises to the cytoplasm. The protein localises to the nucleus. The catalysed reaction is DNA(n) + a 2'-deoxyribonucleoside 5'-triphosphate = DNA(n+1) + diphosphate. It catalyses the reaction Endonucleolytic cleavage to 5'-phosphomonoester.. In terms of biological role, capsid protein (CA) is the structural component of the virus-like particle (VLP), forming the shell that encapsulates the retrotransposons dimeric RNA genome. The particles are assembled from trimer-clustered units and there are holes in the capsid shells that allow for the diffusion of macromolecules. CA also has nucleocapsid-like chaperone activity, promoting primer tRNA(i)-Met annealing to the multipartite primer-binding site (PBS), dimerization of Ty2 RNA and initiation of reverse transcription. Functionally, the aspartyl protease (PR) mediates the proteolytic cleavages of the Gag and Gag-Pol polyproteins after assembly of the VLP. Reverse transcriptase/ribonuclease H (RT) is a multifunctional enzyme that catalyzes the conversion of the retro-elements RNA genome into dsDNA within the VLP. The enzyme displays a DNA polymerase activity that can copy either DNA or RNA templates, and a ribonuclease H (RNase H) activity that cleaves the RNA strand of RNA-DNA heteroduplexes during plus-strand synthesis and hydrolyzes RNA primers. The conversion leads to a linear dsDNA copy of the retrotransposon that includes long terminal repeats (LTRs) at both ends. Its function is as follows. Integrase (IN) targets the VLP to the nucleus, where a subparticle preintegration complex (PIC) containing at least integrase and the newly synthesized dsDNA copy of the retrotransposon must transit the nuclear membrane. Once in the nucleus, integrase performs the integration of the dsDNA into the host genome. This Saccharomyces cerevisiae (strain ATCC 204508 / S288c) (Baker's yeast) protein is Transposon Ty2-C Gag-Pol polyprotein (TY2B-C).